The following is a 235-amino-acid chain: Aspartate/glutamate leucyltransferase (235 aa).

Belongs to the R-transferase family. Bpt subfamily.

The protein resides in the cytoplasm. It catalyses the reaction N-terminal L-glutamyl-[protein] + L-leucyl-tRNA(Leu) = N-terminal L-leucyl-L-glutamyl-[protein] + tRNA(Leu) + H(+). It carries out the reaction N-terminal L-aspartyl-[protein] + L-leucyl-tRNA(Leu) = N-terminal L-leucyl-L-aspartyl-[protein] + tRNA(Leu) + H(+). In terms of biological role, functions in the N-end rule pathway of protein degradation where it conjugates Leu from its aminoacyl-tRNA to the N-termini of proteins containing an N-terminal aspartate or glutamate. The polypeptide is Aspartate/glutamate leucyltransferase (Pseudomonas putida (strain ATCC 47054 / DSM 6125 / CFBP 8728 / NCIMB 11950 / KT2440)).